A 327-amino-acid polypeptide reads, in one-letter code: Pyruvate dehydrogenase E1 component subunit beta (327 aa).

Residue Glu60 coordinates thiamine diphosphate. K(+) is bound by residues Val113, Ala161, Ile162, and Glu164.

Heterodimer of an alpha and a beta chain. Requires thiamine diphosphate as cofactor.

It is found in the plastid. It localises to the chloroplast. The enzyme catalyses N(6)-[(R)-lipoyl]-L-lysyl-[protein] + pyruvate + H(+) = N(6)-[(R)-S(8)-acetyldihydrolipoyl]-L-lysyl-[protein] + CO2. In terms of biological role, the pyruvate dehydrogenase complex catalyzes the overall conversion of pyruvate to acetyl-CoA and CO(2). It contains multiple copies of three enzymatic components: pyruvate dehydrogenase (E1), dihydrolipoamide acetyltransferase (E2) and lipoamide dehydrogenase (E3). This Cyanidium caldarium (Red alga) protein is Pyruvate dehydrogenase E1 component subunit beta (pdhB).